The primary structure comprises 90 residues: Large ribosomal subunit protein bL27 (90 aa).

The interval 1–22 (MAHKKAGGSSRNGRDSESKRLG) is disordered.

It belongs to the bacterial ribosomal protein bL27 family.

The polypeptide is Large ribosomal subunit protein bL27 (Allorhizobium ampelinum (strain ATCC BAA-846 / DSM 112012 / S4) (Agrobacterium vitis (strain S4))).